A 417-amino-acid polypeptide reads, in one-letter code: Gamma-glutamyl phosphate reductase (417 aa).

The protein belongs to the gamma-glutamyl phosphate reductase family.

The protein localises to the cytoplasm. The enzyme catalyses L-glutamate 5-semialdehyde + phosphate + NADP(+) = L-glutamyl 5-phosphate + NADPH + H(+). The protein operates within amino-acid biosynthesis; L-proline biosynthesis; L-glutamate 5-semialdehyde from L-glutamate: step 2/2. Catalyzes the NADPH-dependent reduction of L-glutamate 5-phosphate into L-glutamate 5-semialdehyde and phosphate. The product spontaneously undergoes cyclization to form 1-pyrroline-5-carboxylate. In Escherichia coli O17:K52:H18 (strain UMN026 / ExPEC), this protein is Gamma-glutamyl phosphate reductase.